An 83-amino-acid chain; its full sequence is Large ribosomal subunit protein bL27c (83 aa).

The disordered stretch occupies residues 1–24 (MAHKKGAGSTKNGRDSNAKRLGVK).

This sequence belongs to the bacterial ribosomal protein bL27 family.

It localises to the plastid. The protein localises to the chloroplast. This Trieres chinensis (Marine centric diatom) protein is Large ribosomal subunit protein bL27c (rpl27).